The sequence spans 330 residues: MKLKLYNVRGEEAVLAKKWADDNGIEISLTESPLTPETVKEAEGFDGIANAQIGPLDDAIYPLLKEMGIKQIAQHSASVDMYNLDLATENDIIITNVPSYSPESIAEFTVTIVLNLIRHVELIRENVKKQNFTWGLPIRGRVLGDMTVAIIGTGRIGLATAKIFKGFGCKVVGYDIYQSDAAKAVLDYKESVEEAIKDADLVSLHMPPTAENTHLFNSDLFKSFKKGAILMNMARGAVIETQDLLDALDAGLLSGAGIDTYEFEGPYIPKNFEGQEITDSLFKALINHPKVIYTPHAAYYTDEAVKNLVEGALNATVEIIKTGTTTTRVN.

NAD(+)-binding positions include 155-156, aspartate 175, 206-207, asparagine 212, 233-235, and aspartate 259; these read RI, MP, and MAR. The active site involves arginine 235. Glutamate 264 is an active-site residue. The Proton donor role is filled by histidine 296.

This sequence belongs to the D-isomer specific 2-hydroxyacid dehydrogenase family.

It catalyses the reaction (R)-lactate + NAD(+) = pyruvate + NADH + H(+). The chain is D-lactate dehydrogenase (ldhD) from Streptococcus pyogenes serotype M1.